A 158-amino-acid polypeptide reads, in one-letter code: Protein-export protein SecB (158 aa).

It belongs to the SecB family. In terms of assembly, homotetramer, a dimer of dimers. One homotetramer interacts with 1 SecA dimer.

The protein resides in the cytoplasm. Its function is as follows. One of the proteins required for the normal export of preproteins out of the cell cytoplasm. It is a molecular chaperone that binds to a subset of precursor proteins, maintaining them in a translocation-competent state. It also specifically binds to its receptor SecA. The protein is Protein-export protein SecB of Photorhabdus laumondii subsp. laumondii (strain DSM 15139 / CIP 105565 / TT01) (Photorhabdus luminescens subsp. laumondii).